The primary structure comprises 164 residues: NADH-quinone oxidoreductase subunit I (164 aa).

4Fe-4S ferredoxin-type domains lie at 55–85 (LRRY…IDAE) and 95–124 (TRYD…EGPN). Positions 65, 68, 71, 75, 104, 107, 110, and 114 each coordinate [4Fe-4S] cluster.

The protein belongs to the complex I 23 kDa subunit family. NDH-1 is composed of 14 different subunits. Subunits NuoA, H, J, K, L, M, N constitute the membrane sector of the complex. It depends on [4Fe-4S] cluster as a cofactor.

Its subcellular location is the cell inner membrane. The enzyme catalyses a quinone + NADH + 5 H(+)(in) = a quinol + NAD(+) + 4 H(+)(out). Its function is as follows. NDH-1 shuttles electrons from NADH, via FMN and iron-sulfur (Fe-S) centers, to quinones in the respiratory chain. The immediate electron acceptor for the enzyme in this species is believed to be ubiquinone. Couples the redox reaction to proton translocation (for every two electrons transferred, four hydrogen ions are translocated across the cytoplasmic membrane), and thus conserves the redox energy in a proton gradient. The chain is NADH-quinone oxidoreductase subunit I from Jannaschia sp. (strain CCS1).